The sequence spans 105 residues: Protein SMALL AUXIN UP-REGULATED RNA 16 (105 aa).

The protein belongs to the ARG7 family. Expressed in etiolated hypocotyls, cotyledons, leaves, flowers and siliques.

It localises to the cell membrane. Functionally, provide a mechanistic link between auxin and plasma membrane H(+)-ATPases (PM H(+)-ATPases, e.g. AHA1 and AHA2), and triggers PM H(+)-ATPases activity by promoting phosphorylation of their C-terminal autoinhibitory domain as a result of PP2C-D subfamily of type 2C phosphatases inhibition, thus leading to the acidification of the apoplast and the facilitation of solutes and water uptake to drive cell expansion. Triggers plant growth probably by promoting cell elongation. Regulates branch angles and bending. In Arabidopsis thaliana (Mouse-ear cress), this protein is Protein SMALL AUXIN UP-REGULATED RNA 16.